We begin with the raw amino-acid sequence, 363 residues long: Ribosomal RNA large subunit methyltransferase M (363 aa).

S-adenosyl-L-methionine contacts are provided by residues Ser194, 227 to 230 (CPGG), Asp246, Asp266, and Asp284. Catalysis depends on Lys313, which acts as the Proton acceptor.

It belongs to the class I-like SAM-binding methyltransferase superfamily. RNA methyltransferase RlmE family. RlmM subfamily. Monomer.

Its subcellular location is the cytoplasm. It catalyses the reaction cytidine(2498) in 23S rRNA + S-adenosyl-L-methionine = 2'-O-methylcytidine(2498) in 23S rRNA + S-adenosyl-L-homocysteine + H(+). In terms of biological role, catalyzes the 2'-O-methylation at nucleotide C2498 in 23S rRNA. The protein is Ribosomal RNA large subunit methyltransferase M of Haemophilus influenzae (strain PittEE).